Reading from the N-terminus, the 97-residue chain is Nuclear protein 2 (97 aa).

Residues Leu-76–Thr-97 form a disordered region. Residues Gln-80–Thr-97 are compositionally biased toward basic residues.

This sequence belongs to the NUPR family.

Its subcellular location is the nucleus. In terms of biological role, acts as a transcriptional repressor by inhibiting gene expression at the NUPR1 promoter in a p53/TP53-dependent manner in cancer cells. Involved in the G1 cell cycle arrest, and in a decrease in cell viability and cell proliferation. Plays a role as a negative regulator of the protumoral factor NUPR1. The protein is Nuclear protein 2 of Homo sapiens (Human).